The primary structure comprises 270 residues: Diaminopimelate epimerase (270 aa).

Substrate contacts are provided by asparagine 15, glutamine 49, and asparagine 66. Cysteine 75 functions as the Proton donor in the catalytic mechanism. Residues 76 to 77 (GN), asparagine 155, asparagine 187, and 204 to 205 (ER) each bind substrate. Catalysis depends on cysteine 213, which acts as the Proton acceptor. Position 214–215 (214–215 (GS)) interacts with substrate.

This sequence belongs to the diaminopimelate epimerase family. Homodimer.

It localises to the cytoplasm. The enzyme catalyses (2S,6S)-2,6-diaminopimelate = meso-2,6-diaminopimelate. It participates in amino-acid biosynthesis; L-lysine biosynthesis via DAP pathway; DL-2,6-diaminopimelate from LL-2,6-diaminopimelate: step 1/1. Its function is as follows. Catalyzes the stereoinversion of LL-2,6-diaminopimelate (L,L-DAP) to meso-diaminopimelate (meso-DAP), a precursor of L-lysine and an essential component of the bacterial peptidoglycan. The chain is Diaminopimelate epimerase from Rickettsia rickettsii (strain Iowa).